A 360-amino-acid chain; its full sequence is Photosystem II protein D1 (360 aa).

The next 3 helical transmembrane spans lie at 30-47 (YVGW…AAAA), 119-134 (HFLI…QWEL), and 143-157 (WICV…AAFA). His-119 is a binding site for chlorophyll a. Tyr-127 is a binding site for pheophytin a. [CaMn4O5] cluster is bound by residues Asp-171 and Glu-190. The helical transmembrane segment at 198-219 (FHMAGVAGMFGGSLFSAMHGSL) threads the bilayer. Residue His-199 coordinates chlorophyll a. A quinone-binding positions include His-216 and 265–266 (SF). Fe cation is bound at residue His-216. His-273 is a Fe cation binding site. Residues 275–289 (FLAVFPVVCVWLTSM) traverse the membrane as a helical segment. His-333, Glu-334, Asp-343, and Ala-345 together coordinate [CaMn4O5] cluster. Positions 346 to 360 (AAESTTVALSAPAIG) are excised as a propeptide.

Belongs to the reaction center PufL/M/PsbA/D family. In terms of assembly, PSII is composed of 1 copy each of membrane proteins PsbA, PsbB, PsbC, PsbD, PsbE, PsbF, PsbH, PsbI, PsbJ, PsbK, PsbL, PsbM, PsbT, PsbX, PsbY, Psb30/Ycf12, peripheral proteins PsbO, CyanoQ (PsbQ), PsbU, PsbV and a large number of cofactors. It forms dimeric complexes. The cofactor is The D1/D2 heterodimer binds P680, chlorophylls that are the primary electron donor of PSII, and subsequent electron acceptors. It shares a non-heme iron and each subunit binds pheophytin, quinone, additional chlorophylls, carotenoids and lipids. D1 provides most of the ligands for the Mn4-Ca-O5 cluster of the oxygen-evolving complex (OEC). There is also a Cl(-1) ion associated with D1 and D2, which is required for oxygen evolution. The PSII complex binds additional chlorophylls, carotenoids and specific lipids.. Post-translationally, tyr-162 forms a radical intermediate that is referred to as redox-active TyrZ, YZ or Y-Z. C-terminally processed by CtpA; processing is essential to allow assembly of the oxygen-evolving complex and thus photosynthetic growth.

The protein localises to the cellular thylakoid membrane. It carries out the reaction 2 a plastoquinone + 4 hnu + 2 H2O = 2 a plastoquinol + O2. In terms of biological role, photosystem II (PSII) is a light-driven water:plastoquinone oxidoreductase that uses light energy to abstract electrons from H(2)O, generating O(2) and a proton gradient subsequently used for ATP formation. It consists of a core antenna complex that captures photons, and an electron transfer chain that converts photonic excitation into a charge separation. The D1/D2 (PsbA/PsbD) reaction center heterodimer binds P680, the primary electron donor of PSII as well as several subsequent electron acceptors. This chain is Photosystem II protein D1, found in Prochlorococcus marinus (strain MIT 9312).